The following is a 144-amino-acid chain: Large ribosomal subunit protein uL15 (144 aa).

The disordered stretch occupies residues 1–53 (MRLNTLSPAEGAKHAPKRLGRGIGSGLGKTGGRGHKGQNSRSGGGVRRGFEGG). Over residues 21–31 (RGIGSGLGKTG) the composition is skewed to gly residues.

It belongs to the universal ribosomal protein uL15 family. In terms of assembly, part of the 50S ribosomal subunit.

Binds to the 23S rRNA. The sequence is that of Large ribosomal subunit protein uL15 from Pectobacterium atrosepticum (strain SCRI 1043 / ATCC BAA-672) (Erwinia carotovora subsp. atroseptica).